Consider the following 175-residue polypeptide: Crossover junction endodeoxyribonuclease RuvC (175 aa).

Residues Asp-7, Glu-68, and Asp-141 contribute to the active site. Mg(2+)-binding residues include Asp-7, Glu-68, and Asp-141.

It belongs to the RuvC family. In terms of assembly, homodimer which binds Holliday junction (HJ) DNA. The HJ becomes 2-fold symmetrical on binding to RuvC with unstacked arms; it has a different conformation from HJ DNA in complex with RuvA. In the full resolvosome a probable DNA-RuvA(4)-RuvB(12)-RuvC(2) complex forms which resolves the HJ. It depends on Mg(2+) as a cofactor.

The protein localises to the cytoplasm. It carries out the reaction Endonucleolytic cleavage at a junction such as a reciprocal single-stranded crossover between two homologous DNA duplexes (Holliday junction).. In terms of biological role, the RuvA-RuvB-RuvC complex processes Holliday junction (HJ) DNA during genetic recombination and DNA repair. Endonuclease that resolves HJ intermediates. Cleaves cruciform DNA by making single-stranded nicks across the HJ at symmetrical positions within the homologous arms, yielding a 5'-phosphate and a 3'-hydroxyl group; requires a central core of homology in the junction. The consensus cleavage sequence is 5'-(A/T)TT(C/G)-3'. Cleavage occurs on the 3'-side of the TT dinucleotide at the point of strand exchange. HJ branch migration catalyzed by RuvA-RuvB allows RuvC to scan DNA until it finds its consensus sequence, where it cleaves and resolves the cruciform DNA. The polypeptide is Crossover junction endodeoxyribonuclease RuvC (Salinispora arenicola (strain CNS-205)).